The sequence spans 230 residues: tRNA (guanine-N(1)-)-methyltransferase (230 aa).

Residues Gly-114 and 138–143 (IGDYVL) each bind S-adenosyl-L-methionine.

It belongs to the RNA methyltransferase TrmD family. As to quaternary structure, homodimer.

The protein localises to the cytoplasm. The catalysed reaction is guanosine(37) in tRNA + S-adenosyl-L-methionine = N(1)-methylguanosine(37) in tRNA + S-adenosyl-L-homocysteine + H(+). Its function is as follows. Specifically methylates guanosine-37 in various tRNAs. This Rhodococcus jostii (strain RHA1) protein is tRNA (guanine-N(1)-)-methyltransferase.